The following is a 762-amino-acid chain: 5-methyltetrahydropteroyltriglutamate--homocysteine methyltransferase (762 aa).

Residues 17-20 and K111 each bind 5-methyltetrahydropteroyltri-L-glutamate; that span reads REWK. Residues 435–437 and E488 contribute to the L-homocysteine site; that span reads IGS. L-methionine-binding positions include 435 to 437 and E488; that span reads IGS. 5-methyltetrahydropteroyltri-L-glutamate contacts are provided by residues 519–520 and W565; that span reads RC. D603 is an L-homocysteine binding site. D603 is an L-methionine binding site. E609 provides a ligand contact to 5-methyltetrahydropteroyltri-L-glutamate. H645, C647, and E669 together coordinate Zn(2+). The Proton donor role is filled by H698. A Zn(2+)-binding site is contributed by C730.

It belongs to the vitamin-B12 independent methionine synthase family. Requires Zn(2+) as cofactor.

The enzyme catalyses 5-methyltetrahydropteroyltri-L-glutamate + L-homocysteine = tetrahydropteroyltri-L-glutamate + L-methionine. The protein operates within amino-acid biosynthesis; L-methionine biosynthesis via de novo pathway; L-methionine from L-homocysteine (MetE route): step 1/1. In terms of biological role, catalyzes the transfer of a methyl group from 5-methyltetrahydrofolate to homocysteine resulting in methionine formation. The polypeptide is 5-methyltetrahydropteroyltriglutamate--homocysteine methyltransferase (Bacillus cereus (strain ATCC 14579 / DSM 31 / CCUG 7414 / JCM 2152 / NBRC 15305 / NCIMB 9373 / NCTC 2599 / NRRL B-3711)).